A 218-amino-acid chain; its full sequence is MRKRISAIIMTLFMVFMSCNNGGPELKSDEVAKSDGTVLDLAKISKKIKDAVEFAASVKEIETLVKSIDELAKAIGKKIKQNSEDLEVDNGKNNKNGELVAGAFQVMLTVKAKLEKLGNTPEISEELKGKITDSKSKCKEFVDKVKADSDISKAEATDEHVKKAIDQVNAPAGEKGVVELVKLNKSIGELLKAANAAAEAAIAELTAPVKAEKPSQNN.

An N-terminal signal peptide occupies residues 1-18; it reads MRKRISAIIMTLFMVFMS. The N-palmitoyl cysteine moiety is linked to residue C19. C19 is lipidated: S-diacylglycerol cysteine.

The protein belongs to the variable small protein (Vsp) family.

The protein resides in the cell outer membrane. Its function is as follows. The Vlp and Vsp proteins are antigenically distinct proteins, only one vlp or vsp gene is transcriptionally active at any one time. Switching between these genes is a mechanism of host immune response evasion. In Borrelia hermsii, this protein is Variable small protein 8.